The following is a 529-amino-acid chain: Bifunctional purine biosynthesis protein PurH (529 aa).

The region spanning 1–148 (MTNRNVIKNV…KNYKNVLVVT (148 aa)) is the MGS-like domain.

The protein belongs to the PurH family.

It carries out the reaction (6R)-10-formyltetrahydrofolate + 5-amino-1-(5-phospho-beta-D-ribosyl)imidazole-4-carboxamide = 5-formamido-1-(5-phospho-D-ribosyl)imidazole-4-carboxamide + (6S)-5,6,7,8-tetrahydrofolate. The catalysed reaction is IMP + H2O = 5-formamido-1-(5-phospho-D-ribosyl)imidazole-4-carboxamide. The protein operates within purine metabolism; IMP biosynthesis via de novo pathway; 5-formamido-1-(5-phospho-D-ribosyl)imidazole-4-carboxamide from 5-amino-1-(5-phospho-D-ribosyl)imidazole-4-carboxamide (10-formyl THF route): step 1/1. It functions in the pathway purine metabolism; IMP biosynthesis via de novo pathway; IMP from 5-formamido-1-(5-phospho-D-ribosyl)imidazole-4-carboxamide: step 1/1. In Buchnera aphidicola subsp. Baizongia pistaciae (strain Bp), this protein is Bifunctional purine biosynthesis protein PurH.